Reading from the N-terminus, the 153-residue chain is Cytochrome c-type biogenesis protein CcmE (153 aa).

Residues 1–8 (MTPVQRRR) lie on the Cytoplasmic side of the membrane. The chain crosses the membrane as a helical; Signal-anchor for type II membrane protein span at residues 9–29 (LAWVLLALLASGLATALVAMA). Residues 30-153 (LERNIAYLYT…DVPVTAPEVR (124 aa)) lie on the Extracellular side of the membrane. Heme contacts are provided by His-123 and Tyr-127.

It belongs to the CcmE/CycJ family.

The protein resides in the cell membrane. In terms of biological role, heme chaperone required for the biogenesis of c-type cytochromes. Transiently binds heme delivered by CcmC and transfers the heme to apo-cytochromes in a process facilitated by CcmF and CcmH. This Stenotrophomonas maltophilia (strain K279a) protein is Cytochrome c-type biogenesis protein CcmE.